The sequence spans 150 residues: UPF0756 membrane protein YPN_1328 (150 aa).

The next 4 helical transmembrane spans lie at 16–36 (ALGILSHNMTVTLAILILIAI), 51–71 (YGLTIGVLILTIGVMAPIASG), 88–108 (ILAIVVGVAVSWLGGRGVSLM), and 114–134 (VVAGLLVGTVLGVALFKGVPV).

Belongs to the UPF0756 family.

The protein resides in the cell membrane. The sequence is that of UPF0756 membrane protein YPN_1328 from Yersinia pestis bv. Antiqua (strain Nepal516).